Consider the following 262-residue polypeptide: Acyl-[acyl-carrier-protein]--UDP-N-acetylglucosamine O-acyltransferase (262 aa).

The protein belongs to the transferase hexapeptide repeat family. LpxA subfamily. In terms of assembly, homotrimer.

It is found in the cytoplasm. The catalysed reaction is a (3R)-hydroxyacyl-[ACP] + UDP-N-acetyl-alpha-D-glucosamine = a UDP-3-O-[(3R)-3-hydroxyacyl]-N-acetyl-alpha-D-glucosamine + holo-[ACP]. It functions in the pathway glycolipid biosynthesis; lipid IV(A) biosynthesis; lipid IV(A) from (3R)-3-hydroxytetradecanoyl-[acyl-carrier-protein] and UDP-N-acetyl-alpha-D-glucosamine: step 1/6. Involved in the biosynthesis of lipid A, a phosphorylated glycolipid that anchors the lipopolysaccharide to the outer membrane of the cell. This Burkholderia lata (strain ATCC 17760 / DSM 23089 / LMG 22485 / NCIMB 9086 / R18194 / 383) protein is Acyl-[acyl-carrier-protein]--UDP-N-acetylglucosamine O-acyltransferase.